A 134-amino-acid chain; its full sequence is Putative pre-16S rRNA nuclease (134 aa).

It belongs to the YqgF nuclease family.

The protein resides in the cytoplasm. Could be a nuclease involved in processing of the 5'-end of pre-16S rRNA. The sequence is that of Putative pre-16S rRNA nuclease from Hydrogenovibrio crunogenus (strain DSM 25203 / XCL-2) (Thiomicrospira crunogena).